A 373-amino-acid chain; its full sequence is Thyroid hormone receptor beta-A (373 aa).

The segment at 1 to 18 (MPSSMSGYIPSYLDKDEL) is modulating. 2 consecutive NR C4-type zinc fingers follow at residues 19–39 (CVVC…CEGC) and 57–81 (CKYE…FKKC). The segment at residues 19–93 (CVVCGDKATG…VGMATDLVLD (75 aa)) is a DNA-binding region (nuclear receptor). The NR LBD domain maps to 129–373 (EEWELIQVVT…PPLFLEVFED (245 aa)).

This sequence belongs to the nuclear hormone receptor family. NR1 subfamily.

The protein localises to the nucleus. High affinity receptor for triiodothyronine (T3). This chain is Thyroid hormone receptor beta-A (thrb-a), found in Xenopus laevis (African clawed frog).